The following is a 314-amino-acid chain: Basic leucine zipper 63 (314 aa).

Ser-29 is subject to Phosphoserine; by KIN10. Residues 94–177 (KPQDTSGRSD…SRRRKQAHLS (84 aa)) form a disordered region. Residues 96–133 (QDTSGRSDNGGANESEQASLASSKATPMMSSAITSGSE) are compositionally biased toward polar residues. In terms of domain architecture, bZIP spans 151–214 (NVKRVKRMLS…NDASVENRVL (64 aa)). Positions 153 to 172 (KRVKRMLSNRESARRSRRRK) are basic motif. The short motif at 155-162 (VKRMLSNR) is the Nuclear localization signal 1 element. The tract at residues 179-193 (LETQVSQLRVENSKL) is leucine-zipper. The tract at residues 253–274 (SLPSETSNSPDTTSSQVTTPEI) is disordered. Ser-294 and Ser-300 each carry phosphoserine; by KIN10. A Nuclear localization signal 2 motif is present at residues 295 to 302 (MRRVESLE).

The protein belongs to the bZIP family. Homodimer. Forms a heterodimer with LSD1, BZIP1, BZIP2, BZIP9, BZIP10, BZIP11, BZIP25, BZIP44 and BZIP53. Interacts with KIN10 and SNF4. Component of a ternary complex composed of BZIP2-BZIP63 heterodimer and KIN10. Post-translationally, phosphorylated. The phosphorylation at Ser-29, Ser-294 and Ser-300 by KIN10 strongly enhances its ability to form homo- as well as heterodimers and are then essential for its transcriptional activity. In terms of tissue distribution, expressed in roots, shoots, young leaves, pollen, and flowers.

The protein localises to the nucleus. With respect to regulation, up-regulated by KIN10 under a phosphorylation-dependent manner. Transcription factor involved in controlling responses to starvation. BZIP2-BZIP63-KIN10 complex binds to the ETFQO promoter to up-regulate its transcription. The sequence is that of Basic leucine zipper 63 (BZIP63) from Arabidopsis thaliana (Mouse-ear cress).